A 239-amino-acid chain; its full sequence is Chlorate reductase subunit gamma (239 aa).

The first 27 residues, 1–27 (MKTNILVKRMAVIGLAVAAACTGAAAA), serve as a signal peptide directing secretion. His74 and Met138 together coordinate heme b.

Heterotrimer of alpha, beta and gamma subunits. Heme b serves as cofactor.

It localises to the periplasm. Functionally, may transfer electrons to the iron-sulfur centers of ClrB. This is Chlorate reductase subunit gamma (clrC) from Ideonella dechloratans.